Consider the following 254-residue polypeptide: Coiled-coil domain-containing protein 152 (254 aa).

Residues 61 to 246 (SIKEECATLH…LEQRLSVGKD (186 aa)) are a coiled coil.

Detected in stomach.

In Homo sapiens (Human), this protein is Coiled-coil domain-containing protein 152 (CCDC152).